A 194-amino-acid polypeptide reads, in one-letter code: Large ribosomal subunit protein eL15 (194 aa).

A disordered region spans residues 164–194 (SAGKKGRGLRNKGKGAEKVRPSVRANKGKTK). Basic residues predominate over residues 167–176 (KKGRGLRNKG).

It belongs to the eukaryotic ribosomal protein eL15 family.

The chain is Large ribosomal subunit protein eL15 from Thermococcus gammatolerans (strain DSM 15229 / JCM 11827 / EJ3).